Reading from the N-terminus, the 334-residue chain is Anthranilate phosphoribosyltransferase (334 aa).

5-phospho-alpha-D-ribose 1-diphosphate-binding positions include glycine 79, 82 to 83, serine 87, 89 to 92, 107 to 115, and serine 119; these read GD, NIST, and KHGNRSISS. Glycine 79 contacts anthranilate. Serine 91 provides a ligand contact to Mg(2+). Asparagine 110 is a binding site for anthranilate. Residue arginine 165 participates in anthranilate binding. Mg(2+) contacts are provided by aspartate 224 and glutamate 225.

Belongs to the anthranilate phosphoribosyltransferase family. As to quaternary structure, homodimer. The cofactor is Mg(2+).

The enzyme catalyses N-(5-phospho-beta-D-ribosyl)anthranilate + diphosphate = 5-phospho-alpha-D-ribose 1-diphosphate + anthranilate. The protein operates within amino-acid biosynthesis; L-tryptophan biosynthesis; L-tryptophan from chorismate: step 2/5. In terms of biological role, catalyzes the transfer of the phosphoribosyl group of 5-phosphorylribose-1-pyrophosphate (PRPP) to anthranilate to yield N-(5'-phosphoribosyl)-anthranilate (PRA). The sequence is that of Anthranilate phosphoribosyltransferase from Streptococcus sanguinis (strain SK36).